The following is a 275-amino-acid chain: 4-deoxy-L-threo-5-hexosulose-uronate ketol-isomerase (275 aa).

Residues histidine 193, histidine 195, glutamate 200, and histidine 242 each coordinate Zn(2+).

This sequence belongs to the KduI family. It depends on Zn(2+) as a cofactor.

It catalyses the reaction 5-dehydro-4-deoxy-D-glucuronate = 3-deoxy-D-glycero-2,5-hexodiulosonate. It functions in the pathway glycan metabolism; pectin degradation; 2-dehydro-3-deoxy-D-gluconate from pectin: step 4/5. Its function is as follows. Catalyzes the isomerization of 5-dehydro-4-deoxy-D-glucuronate to 3-deoxy-D-glycero-2,5-hexodiulosonate. The chain is 4-deoxy-L-threo-5-hexosulose-uronate ketol-isomerase from Bacillus licheniformis (strain ATCC 14580 / DSM 13 / JCM 2505 / CCUG 7422 / NBRC 12200 / NCIMB 9375 / NCTC 10341 / NRRL NRS-1264 / Gibson 46).